The sequence spans 777 residues: Protein translocase subunit SecA (777 aa).

ATP-binding positions include Gln-94, 112-116, and Asp-501; that span reads GEGKT.

Belongs to the SecA family. As to quaternary structure, monomer and homodimer. Part of the essential Sec protein translocation apparatus which comprises SecA, SecYEG and auxiliary proteins SecDF. Other proteins may also be involved.

Its subcellular location is the cell membrane. The protein resides in the cytoplasm. The catalysed reaction is ATP + H2O + cellular proteinSide 1 = ADP + phosphate + cellular proteinSide 2.. Part of the Sec protein translocase complex. Interacts with the SecYEG preprotein conducting channel. Has a central role in coupling the hydrolysis of ATP to the transfer of proteins into and across the cell membrane, serving as an ATP-driven molecular motor driving the stepwise translocation of polypeptide chains across the membrane. The sequence is that of Protein translocase subunit SecA from Mycobacterium avium (strain 104).